The primary structure comprises 486 residues: Galactose-1-phosphate uridylyltransferase (486 aa).

Belongs to the galactose-1-phosphate uridylyltransferase type 2 family.

It localises to the cytoplasm. The catalysed reaction is alpha-D-galactose 1-phosphate + UDP-alpha-D-glucose = alpha-D-glucose 1-phosphate + UDP-alpha-D-galactose. The protein operates within carbohydrate metabolism; galactose metabolism. The protein is Galactose-1-phosphate uridylyltransferase of Lacticaseibacillus casei (strain BL23) (Lactobacillus casei).